Consider the following 352-residue polypeptide: Enhancer of mRNA-decapping protein 1 (352 aa).

2 disordered regions span residues 1 to 258 and 277 to 352; these read MMAH…PRNH and QYPQ…SSKS. The segment covering 71 to 80 has biased composition (low complexity); the sequence is HTSSNTSNNK. 2 stretches are compositionally biased toward polar residues: residues 93–104 and 205–225; these read NFGNESSHQNGG and TEPN…SVNV. Residues 289–309 show a composition bias toward low complexity; that stretch reads GGVYPMVAPQYQQQPQQHPQQ.

This sequence belongs to the EDC family.

It localises to the cytoplasm. Functionally, mRNA-binding protein which stimulates mRNA decapping. The protein is Enhancer of mRNA-decapping protein 1 (EDC1) of Debaryomyces hansenii (strain ATCC 36239 / CBS 767 / BCRC 21394 / JCM 1990 / NBRC 0083 / IGC 2968) (Yeast).